The following is a 275-amino-acid chain: Elongation factor Ts (275 aa).

Residues 76-79 are involved in Mg(2+) ion dislocation from EF-Tu; it reads TDFV.

Belongs to the EF-Ts family.

The protein localises to the cytoplasm. In terms of biological role, associates with the EF-Tu.GDP complex and induces the exchange of GDP to GTP. It remains bound to the aminoacyl-tRNA.EF-Tu.GTP complex up to the GTP hydrolysis stage on the ribosome. This Mycolicibacterium paratuberculosis (strain ATCC BAA-968 / K-10) (Mycobacterium paratuberculosis) protein is Elongation factor Ts.